The following is a 279-amino-acid chain: Thioredoxin-like 1-2, chloroplastic (279 aa).

The transit peptide at 1-34 (MAATAAQAVAVKGSVAVPPCGSRGRRRGAVASVR) directs the protein to the chloroplast. Residues 61-203 (PRRSRPVPRN…FRDALAKHKP (143 aa)) form the Thioredoxin domain. Residues Cys126 and Cys129 each act as nucleophile in the active site. Residues Cys126 and Cys129 are joined by a disulfide bond. A disordered region spans residues 242–279 (GDAAAAQELDRGSTKLSPPAKPLVKQGSEERSLVSSGR).

Belongs to the thioredoxin family.

It localises to the plastid. The protein resides in the chloroplast. In terms of biological role, probable thiol-disulfide oxidoreductase that may participate in various redox reactions. The sequence is that of Thioredoxin-like 1-2, chloroplastic from Oryza sativa subsp. japonica (Rice).